Consider the following 328-residue polypeptide: MDIAIIGATGYAGGELIRLLGMHSAAEVVCATSRRVEGTRVSAVHPQLNGFTDLSFTNPSVDEIEADVAFLAVPHTAGMQYVRALLERGIRVVDLSADYRLPQEIFEKVYGVTHTDYFAAPYGLPELHREEIRGKHFIANPGCFPTGATLAAAPLAAFADTIIYDSKSGVSGAGDNPSATTHFPNVADAITPYKMTTHRHLAEMKMELERLHAKAACYFTPHLLPVNRGILTTAHILLRDPLNQDQVERIYKDYYKDESFVRYQKPSIAAVRGSNFCDLIVESEGKRVVAVSAIDNLVKGASGQAIQNMNLMCGFKENDGLASAGLFP.

Residue C143 is part of the active site.

This sequence belongs to the NAGSA dehydrogenase family. Type 1 subfamily.

Its subcellular location is the cytoplasm. It catalyses the reaction N-acetyl-L-glutamate 5-semialdehyde + phosphate + NADP(+) = N-acetyl-L-glutamyl 5-phosphate + NADPH + H(+). The protein operates within amino-acid biosynthesis; L-arginine biosynthesis; N(2)-acetyl-L-ornithine from L-glutamate: step 3/4. Catalyzes the NADPH-dependent reduction of N-acetyl-5-glutamyl phosphate to yield N-acetyl-L-glutamate 5-semialdehyde. The polypeptide is N-acetyl-gamma-glutamyl-phosphate reductase (Methanosphaerula palustris (strain ATCC BAA-1556 / DSM 19958 / E1-9c)).